The following is a 458-amino-acid chain: ATP synthase subunit beta (458 aa).

147–154 (GGAGVGKT) serves as a coordination point for ATP.

This sequence belongs to the ATPase alpha/beta chains family. F-type ATPases have 2 components, CF(1) - the catalytic core - and CF(0) - the membrane proton channel. CF(1) has five subunits: alpha(3), beta(3), gamma(1), delta(1), epsilon(1). CF(0) has three main subunits: a(1), b(2) and c(9-12). The alpha and beta chains form an alternating ring which encloses part of the gamma chain. CF(1) is attached to CF(0) by a central stalk formed by the gamma and epsilon chains, while a peripheral stalk is formed by the delta and b chains.

The protein localises to the cell inner membrane. The enzyme catalyses ATP + H2O + 4 H(+)(in) = ADP + phosphate + 5 H(+)(out). Its function is as follows. Produces ATP from ADP in the presence of a proton gradient across the membrane. The catalytic sites are hosted primarily by the beta subunits. This is ATP synthase subunit beta from Chromohalobacter salexigens (strain ATCC BAA-138 / DSM 3043 / CIP 106854 / NCIMB 13768 / 1H11).